We begin with the raw amino-acid sequence, 621 residues long: E3 SUMO-protein ligase PIAS2 (621 aa).

The SAP domain occupies 11–45 (VSSFRVSELQVLLGFAGRNKSGRKHDLLMRALHLL). The short motif at 19–23 (LQVLL) is the LXXLL motif element. Residues Lys-46 and Lys-249 each participate in a glycyl lysine isopeptide (Lys-Gly) (interchain with G-Cter in SUMO2) cross-link. Residues 134-299 (QPSPPIPPVH…SMSVYLVRQL (166 aa)) form the PINIT domain. The SP-RING-type zinc-finger motif lies at 331 to 412 (PDSEIATTSL…FMEILNDCSD (82 aa)). Cys-362, His-364, Cys-385, and Cys-388 together coordinate Zn(2+). Glycyl lysine isopeptide (Lys-Gly) (interchain with G-Cter in SUMO2) cross-links involve residues Lys-430, Lys-435, Lys-443, and Lys-452. An SUMO1-binding region spans residues 467–473 (VDVIDLT). Ser-476, Ser-477, and Ser-478 each carry phosphoserine. The Nuclear localization signal signature appears at 484–492 (PPAKRKCIF). Residue Lys-489 forms a Glycyl lysine isopeptide (Lys-Gly) (interchain with G-Cter in SUMO2) linkage. Position 499 is a phosphoserine (Ser-499). Residues Lys-502 and Gln-562 each participate in a glycyl lysine isopeptide (Lys-Gly) (interchain with G-Cter in SUMO2) cross-link. Residues 579 to 610 (SSTSVTTTSSHESSTHVSSSSSRSETGVITSS) are compositionally biased toward low complexity. The segment at 579–621 (SSTSVTTTSSHESSTHVSSSSSRSETGVITSSGSNIPDIISLD) is disordered.

The protein belongs to the PIAS family. Binds SUMO1 and UBE2I. Interacts with AXIN1, JUN, MDM2, PARK7, TP53 and TP73 isoform alpha, but not TP73 isoform beta. Interacts with STAT4 following IL12 and IFN-alpha stimulation of T-cells. Interacts also with GTF2I, GTF2IRD1, IKFZ1, DAB2 and MSX2, as well as with several steroid receptors, including ESR1, ESR2, NR3C1, PGR, AR, and with NCOA2. Sumoylation of a target protein seems to enhance the interaction. Binds to sumoylated ELK1. Binds DNA, such as CDKN1A promoter, in a sequence-specific manner. Interacts with PLAG1. Interacts with KLF8; the interaction results in SUMO ligation and repression of KLF8 transcriptional activity and of its cell cycle progression into G(1) phase. PIAS2-beta interacts with IFIH1/MDA5. Isoform PIAS2-alpha interacts with PML (isoform PML-12). Interacts with PRDM1/Blimp-1. Post-translationally, sumoylated. As to expression, mainly expressed in testis. Isoform 3 is expressed predominantly in adult testis, weakly in pancreas, embryonic testis and sperm, and at very low levels in other organs.

It localises to the nucleus speckle. It is found in the nucleus. The protein localises to the PML body. Its pathway is protein modification; protein sumoylation. Its function is as follows. Functions as an E3-type small ubiquitin-like modifier (SUMO) ligase, stabilizing the interaction between UBE2I and the substrate, and as a SUMO-tethering factor. Plays a crucial role as a transcriptional coregulator in various cellular pathways, including the STAT pathway, the p53 pathway and the steroid hormone signaling pathway. The effects of this transcriptional coregulation, transactivation or silencing may vary depending upon the biological context and the PIAS2 isoform studied. However, it seems to be mostly involved in gene silencing. Binds to sumoylated ELK1 and enhances its transcriptional activity by preventing recruitment of HDAC2 by ELK1, thus reversing SUMO-mediated repression of ELK1 transactivation activity. Isoform PIAS2-beta, but not isoform PIAS2-alpha, promotes MDM2 sumoylation. Isoform PIAS2-alpha promotes PARK7 sumoylation. Isoform PIAS2-beta promotes NCOA2 sumoylation more efficiently than isoform PIAS2-alpha. Isoform PIAS2-alpha sumoylates PML at'Lys-65' and 'Lys-160'. This chain is E3 SUMO-protein ligase PIAS2 (PIAS2), found in Homo sapiens (Human).